Consider the following 286-residue polypeptide: 4-diphosphocytidyl-2-C-methyl-D-erythritol kinase (286 aa).

The active site involves K11. 94 to 104 (PMGGGIGGGSS) provides a ligand contact to ATP. D136 is an active-site residue.

This sequence belongs to the GHMP kinase family. IspE subfamily.

It carries out the reaction 4-CDP-2-C-methyl-D-erythritol + ATP = 4-CDP-2-C-methyl-D-erythritol 2-phosphate + ADP + H(+). The protein operates within isoprenoid biosynthesis; isopentenyl diphosphate biosynthesis via DXP pathway; isopentenyl diphosphate from 1-deoxy-D-xylulose 5-phosphate: step 3/6. Functionally, catalyzes the phosphorylation of the position 2 hydroxy group of 4-diphosphocytidyl-2C-methyl-D-erythritol. The protein is 4-diphosphocytidyl-2-C-methyl-D-erythritol kinase of Pseudomonas putida (strain ATCC 700007 / DSM 6899 / JCM 31910 / BCRC 17059 / LMG 24140 / F1).